We begin with the raw amino-acid sequence, 358 residues long: UDP-N-acetylglucosamine--N-acetylmuramyl-(pentapeptide) pyrophosphoryl-undecaprenol N-acetylglucosamine transferase (358 aa).

UDP-N-acetyl-alpha-D-glucosamine is bound by residues 12 to 14 (TAG), R165, S195, and Q290.

Belongs to the glycosyltransferase 28 family. MurG subfamily.

The protein resides in the cell membrane. The enzyme catalyses di-trans,octa-cis-undecaprenyl diphospho-N-acetyl-alpha-D-muramoyl-L-alanyl-D-glutamyl-meso-2,6-diaminopimeloyl-D-alanyl-D-alanine + UDP-N-acetyl-alpha-D-glucosamine = di-trans,octa-cis-undecaprenyl diphospho-[N-acetyl-alpha-D-glucosaminyl-(1-&gt;4)]-N-acetyl-alpha-D-muramoyl-L-alanyl-D-glutamyl-meso-2,6-diaminopimeloyl-D-alanyl-D-alanine + UDP + H(+). Its pathway is cell wall biogenesis; peptidoglycan biosynthesis. Cell wall formation. Catalyzes the transfer of a GlcNAc subunit on undecaprenyl-pyrophosphoryl-MurNAc-pentapeptide (lipid intermediate I) to form undecaprenyl-pyrophosphoryl-MurNAc-(pentapeptide)GlcNAc (lipid intermediate II). The protein is UDP-N-acetylglucosamine--N-acetylmuramyl-(pentapeptide) pyrophosphoryl-undecaprenol N-acetylglucosamine transferase of Clostridium tetani (strain Massachusetts / E88).